The chain runs to 350 residues: RING finger protein 44 (350 aa).

The segment at 298–339 (CVVCFSDFEVRQLLRVLPCNHEFHAKCVDKWLKANRTCPICR) adopts an RING-type; atypical zinc-finger fold.

In Rattus norvegicus (Rat), this protein is RING finger protein 44 (Rnf44).